The sequence spans 347 residues: Ceramide very long chain fatty acid hydroxylase scs7 (347 aa).

Topologically, residues 1 to 156 are cytoplasmic; it reads MASVTSEKCV…GNFLEPLTKT (156 aa). A helical transmembrane segment spans residues 157–177; it reads PWYMIPLIWVPCVTYGFLYAC. Position 178 (Thr-178) is a topological domain, lumenal. The chain crosses the membrane as a helical span at residues 179 to 199; that stretch reads GIPFSVAITFFIIGLFTWTLV. Residues 200–238 are Cytoplasmic-facing; sequence EYTMHRFLFHLDEYTPDHPIFLTMHFAFHGCHHFLPADK. 5 residues coordinate Zn(2+): His-204, His-209, His-228, His-231, and His-232. The chain crosses the membrane as a helical span at residues 239-259; that stretch reads YRLVMPPALFLIFATPWYHFI. A topological domain (lumenal) is located at residue Gln-260. The helical transmembrane segment at 261–281 threads the bilayer; that stretch reads LVLPHYIGVAGFSGAILGYVF. The Cytoplasmic segment spans residues 282–347; that stretch reads YDLTHYFLHH…EQGKISTKAK (66 aa). 5 residues coordinate Zn(2+): His-286, His-290, His-306, His-309, and His-310.

The protein belongs to the sterol desaturase family. SCS7 subfamily. It depends on Zn(2+) as a cofactor.

The protein resides in the endoplasmic reticulum membrane. It functions in the pathway sphingolipid metabolism. Ceramide hydroxylase involved in the hydroxylation of sphingolipid-associated very long chain fatty acids. Postulated to hydroxylate the very long chain fatty acid of dihydroceramides and phytoceramides at C-2. This is Ceramide very long chain fatty acid hydroxylase scs7 from Schizosaccharomyces pombe (strain 972 / ATCC 24843) (Fission yeast).